The primary structure comprises 336 residues: Histidinol-phosphate aminotransferase (336 aa).

Residue Lys-204 is modified to N6-(pyridoxal phosphate)lysine.

It belongs to the class-II pyridoxal-phosphate-dependent aminotransferase family. Histidinol-phosphate aminotransferase subfamily. It depends on pyridoxal 5'-phosphate as a cofactor.

It catalyses the reaction L-histidinol phosphate + 2-oxoglutarate = 3-(imidazol-4-yl)-2-oxopropyl phosphate + L-glutamate. The protein operates within amino-acid biosynthesis; L-histidine biosynthesis; L-histidine from 5-phospho-alpha-D-ribose 1-diphosphate: step 7/9. This chain is Histidinol-phosphate aminotransferase, found in Thermococcus kodakarensis (strain ATCC BAA-918 / JCM 12380 / KOD1) (Pyrococcus kodakaraensis (strain KOD1)).